The primary structure comprises 349 residues: Nicotinate-nucleotide--dimethylbenzimidazole phosphoribosyltransferase (349 aa).

The Proton acceptor role is filled by E316.

This sequence belongs to the CobT family.

The catalysed reaction is 5,6-dimethylbenzimidazole + nicotinate beta-D-ribonucleotide = alpha-ribazole 5'-phosphate + nicotinate + H(+). Its pathway is nucleoside biosynthesis; alpha-ribazole biosynthesis; alpha-ribazole from 5,6-dimethylbenzimidazole: step 1/2. In terms of biological role, catalyzes the synthesis of alpha-ribazole-5'-phosphate from nicotinate mononucleotide (NAMN) and 5,6-dimethylbenzimidazole (DMB). The protein is Nicotinate-nucleotide--dimethylbenzimidazole phosphoribosyltransferase of Photorhabdus laumondii subsp. laumondii (strain DSM 15139 / CIP 105565 / TT01) (Photorhabdus luminescens subsp. laumondii).